Here is a 983-residue protein sequence, read N- to C-terminus: Eukaryotic translation initiation factor 4E transporter (983 aa).

The disordered stretch occupies residues 1–22 (MEKSVAETENGDAFLELKKLPT). Residue S4 is modified to Phosphoserine. Residues 29-35 (YTKEELL) carry the YXXXXLphi motif motif. The disordered stretch occupies residues 40–99 (RPYSKQRPSCLSEKYDSDGVWDPEKWHASLYPASGRSSPVESLKKESESDRPSLVRRIAD). A compositionally biased stretch (basic and acidic residues) spans 52–66 (EKYDSDGVWDPEKWH). 2 positions are modified to phosphoserine: S73 and S77. The segment covering 81-99 (SLKKESESDRPSLVRRIAD) has biased composition (basic and acidic residues). 4 positions are modified to phosphoserine: S114, S119, S135, and S137. Positions 130 to 160 (VSSRRSGSPLEKDSDGLRLLGGRRIGSGRII) are interaction with CSDE1. The Nuclear localization signal signature appears at 194–210 (RREFGDSKRVFGERRRN). A disordered region spans residues 206–229 (ERRRNDSYTEEEPEWFSAGPTSQS). The interval 218–239 (PEWFSAGPTSQSETIELTGFDD) is interaction with DDX6. Phosphoserine occurs at positions 300, 344, 352, and 373. The segment at 341-360 (SNPSRSGSRSSSLGSTPHEE) is disordered. The segment covering 344–355 (SRSGSRSSSLGS) has biased composition (low complexity). Residue K409 forms a Glycyl lysine isopeptide (Lys-Gly) (interchain with G-Cter in SUMO2) linkage. At S416 the chain carries Phosphoserine. The Nuclear export signal signature appears at 437-446 (VEAGLKGLKV). An interaction with LSM14A region spans residues 447-489 (DQQMKNSTPFMAEHLEETLSAASSNRQLKKDGDMTAFNKLVNT). At K485 the chain carries N6-acetyllysine. 2 positions are modified to phosphoserine: S563 and S586. Disordered regions lie at residues 585–616 (PSPIGFPSGPQQLLGDPFQGMRKPMSPVSAQM), 642–693 (FYQP…MLSP), 708–800 (REKT…VPGT), and 906–951 (LHPP…SSPV). Positions 612 to 637 (VSAQMSQLELQQAALEGLALPHDLAV) match the Nuclear export signal motif. Over residues 651-660 (QVDRTRDGLR) the composition is skewed to basic and acidic residues. The residue at position 692 (S692) is a Phosphoserine. The segment at 694-712 (SFTPTSVIRKMYESREKTK) is interaction with PATL1. A compositionally biased stretch (basic and acidic residues) spans 724 to 734 (DGKEDTQKTSE). Composition is skewed to polar residues over residues 735–774 (ENLLSSNPIPNTDQDSSTTNPKLSTLQRSSCSTPLSQTSR) and 910–928 (GSSSQAAAISVQTPQNVPS). Residues S751, S919, and S949 each carry the phosphoserine modification. The segment at 938 to 983 (QLEHRTSQRSSSPVGLAKWFGSDVLQQPLPSMPTKVISVDELEYRQ) is interaction with LSM14A.

Belongs to the 4E-T/EIF4E-T family. Interacts (via YXXXXLphi motif) with EIF4E. Interacts (via YXXXXLphi motif) with EIF4E2. Interacts with DDX6. Interacts with CSDE1/UNR. Interacts with CNOT1; promoting association with the CCR4-NOT complex. Interacts with LSM14A; promoting EIF4ENIF1 localization to P-bodies. Interacts with PATL1. Interacts with importin beta only in the presence of importin alpha, suggesting a direct interaction with importin alpha. Interacts with APOBEC3G in an RNA-dependent manner. In terms of processing, phosphorylation by MAPK8/JNK1 and or MAPK9/JNK2 in response to oxidative stress promotes P-body assembly. Phosphorylated during meiotic maturation. Highly expressed in developing oocytes.

Its subcellular location is the cytoplasm. It is found in the nucleus. The protein localises to the PML body. It localises to the nucleus speckle. In terms of biological role, EIF4E-binding protein that regulates translation and stability of mRNAs in processing bodies (P-bodies). Plays a key role in P-bodies to coordinate the storage of translationally inactive mRNAs in the cytoplasm and prevent their degradation. Acts as a binding platform for multiple RNA-binding proteins: promotes deadenylation of mRNAs via its interaction with the CCR4-NOT complex, and blocks decapping via interaction with eIF4E (EIF4E and EIF4E2), thereby protecting deadenylated and repressed mRNAs from degradation. Component of a multiprotein complex that sequesters and represses translation of proneurogenic factors during neurogenesis. Promotes miRNA-mediated translational repression. Involved in mRNA translational repression mediated by the miRNA effector TNRC6B by protecting TNRC6B-targeted mRNAs from decapping and subsequent decay. Required for the formation of P-bodies. Also acts as a nucleoplasmic shuttling protein, which mediates the nuclear import of EIF4E and DDX6 by a piggy-back mechanism. This is Eukaryotic translation initiation factor 4E transporter from Mus musculus (Mouse).